The sequence spans 516 residues: Golgin-84 (516 aa).

At 1–492 (MSSWITGLAD…TFLRRYPMMR (492 aa)) the chain is on the cytoplasmic side. Residues 28-80 (QTENATGSADPMRRSMTSSTQSLSTSLKSTLSPVRRSGANSSSSVKSDGGVSV) are disordered. Residues 42–80 (SMTSSTQSLSTSLKSTLSPVRRSGANSSSSVKSDGGVSV) are compositionally biased toward low complexity. Phosphoserine is present on residues S64 and S74. The stretch at 108 to 423 (TNELAAFKIA…KAQTQLQQNM (316 aa)) forms a coiled coil. The chain crosses the membrane as a helical; Anchor for type IV membrane protein span at residues 493-513 (VSVIVYVALLHLWVMFVLLST). Topologically, residues 514–516 (TPN) are lumenal.

Its subcellular location is the golgi apparatus membrane. Its function is as follows. May be involved in maintaining Golgi structure and in intra-Golgi transport. The polypeptide is Golgin-84 (Golgin84) (Drosophila melanogaster (Fruit fly)).